The primary structure comprises 836 residues: Protein IWS1 homolog A (836 aa).

Positions 1–542 (MEADNYSPEH…DMKSGKMGDY (542 aa)) are disordered. Basic and acidic residues-rich tracts occupy residues 20-36 (QDER…EQRS), 43-122 (HQSE…DRSP), 133-148 (EPVR…DVPR), 157-186 (DERH…DKAP), 206-218 (DSKD…HAAS), 288-309 (VPVK…KASD), 370-386 (RSSE…KKLQ), and 458-469 (ERKSKTETKSAD). A compositionally biased stretch (acidic residues) spans 476–485 (SDSENEEENL). The segment covering 533-542 (DMKSGKMGDY) has biased composition (basic and acidic residues). The region spanning 631 to 709 (SAIKEWLTPL…NEWSRPIFGL (79 aa)) is the TFIIS N-terminal domain. Residues 714-746 (KGMTREEREQRDIEQMPQRRRMSSSGGQTPRRD) are disordered. Residues 716-727 (MTREEREQRDIE) are compositionally biased toward basic and acidic residues.

Belongs to the IWS1 family.

The protein resides in the nucleus. Its function is as follows. Transcription factor which plays a key role in defining the composition of the RNA polymerase II (RNAPII) elongation complex and in modulating the production of mature mRNA transcripts. The sequence is that of Protein IWS1 homolog A (iws1-a) from Xenopus laevis (African clawed frog).